An 88-amino-acid polypeptide reads, in one-letter code: Sec-independent protein translocase protein TatA (88 aa).

The chain crosses the membrane as a helical span at residues Met-1 to Gly-21. Residues Glu-49–Arg-71 are compositionally biased toward polar residues. The tract at residues Glu-49–Ala-88 is disordered. Residues Glu-79–Ala-88 are compositionally biased toward basic and acidic residues.

This sequence belongs to the TatA/E family. The Tat system comprises two distinct complexes: a TatABC complex, containing multiple copies of TatA, TatB and TatC subunits, and a separate TatA complex, containing only TatA subunits. Substrates initially bind to the TatABC complex, which probably triggers association of the separate TatA complex to form the active translocon.

The protein resides in the cell membrane. Its function is as follows. Part of the twin-arginine translocation (Tat) system that transports large folded proteins containing a characteristic twin-arginine motif in their signal peptide across membranes. TatA could form the protein-conducting channel of the Tat system. The chain is Sec-independent protein translocase protein TatA from Mycobacterium leprae (strain TN).